We begin with the raw amino-acid sequence, 667 residues long: MTDITANVVVSNPRPIFTESRSFKAVANGKIYIGQIDTDPVNPANQIPVYIENEDGSHVQITQPLIINAAGKIVYNGQLVKIVTVQGHSMAIYDANGSQVDYIANVLKYDPDQYSIEADKKFKYSVKLSDYPTLQDAASAAVDGLLIDRDYNFYGGETVDFGGKVLTIECKAKFIGDGNLIFTKLGKGSRIAGVFMESTTTPWVIKPWTDDNQWLTDAAAVVATLKQSKTDGYQPTVSDYVKFPGIETLLPPNAKGQNITSTLEIRECIGVEVHRASGLMAGFLFRGCHFCKMVDANNPSGGKDGIITFENLSGDWGKGNYVIGGRTSYGSVSSAQFLRNNGGFERDGGVIGFTSYRAGESGVKTWQGTVGSTTSRNYNLQFRDSVVIYPVWDGFDLGADTDMNPELDRPGDYPITQYPLHQLPLNHLIDNLLVRGALGVGFGMDGKGMYVSNITVEDCAGSGAYLLTHESVFTNIAIIDTNTKDFQANQIYISGACRVNGLRLIGIRSTDGQGLTIDAPNSTVSGITGMVDPSRINVANLAEEGLGNIRANSFGYDSAAIKLRIHKLSKTLDSGALYSHINGGAGSGSAYTQLTAISGSTPDAVSLKVNHKDCRGAEIPFVPDIASDDFIKDSSCFLPYWENNSTSLKALVKKPNGELVRLTLATL.

Catalysis depends on residues glutamate 360, aspartate 393, and aspartate 396.

Belongs to the P22likevirus tail fiber protein family. Homotrimer. Interacts with the host O-antigen lipopolysaccharides; this interaction induces cleavage of host O-antigen. Interacts with tail hub protein gp10; this interaction anchors 6 fibers onto the tail hub hexamer.

The protein localises to the virion. In terms of biological role, structural component of the short non-contractile tail. The tail comprises six spikes that mediate primary attachment to the host cell lipopolysaccharides (LPS) and display endorhamnosidase enzymatic activity, hydrolyzing the alpha-1,3-O-glycosidic linkage between rhamnose and galactose of the O-antigen polysaccharide. Digestion of the LPS brings the capsid near the cell outer membrane. The chain is Tail spike protein (9) from Salmonella phage P22 (Bacteriophage P22).